We begin with the raw amino-acid sequence, 539 residues long: Beta-apo-4'-carotenal oxygenase (539 aa).

Catalysis depends on residues Glu228 and Cys262.

The protein belongs to the aldehyde dehydrogenase family.

It catalyses the reaction 4'-apo-beta-carotenal + NAD(+) + H2O = neurosporaxanthin + NADH + 2 H(+). Beta-apo-4'-carotenal oxygenase involved in the last step of synthesis of neurosporaxanthin, a carboxylic apocarotenoid acting as an essential protective pigments and leading to orange pigmentation. Converts the aldehyde beta-apo-4'-carotenal into neurosporaxanthin. Is also able to use shorter apocarotenals as substrates (such as beta-apo-8'-carotenal (C30), beta-apo-10'-carotenal (C27), or the acyclic apocarotenal apo-8'-lycopenal (C30)), indicating wide substrate specificity. Neurosporaxanthin is synthesized from geranyl-geranyl pyrophosphate (GGPP) through several enzymatic activities. Phytoene synthase activity performed by the bifunctional enzyme carAR first produces phytoene from geranyl-geranyl pyrophosphate (GGPP). The phytoene dehydrogenase carB then introduces 4 desaturations to lead to lycopene which is substrate of the carotene cyclase activity of carAR that leads to the production of gamma-carotene. CarB then performs a 5th desaturation reaction to yield torulene. Torulene is the substrate of the dioxidase carT that breaks the molecule, removing five carbon atoms to yield beta-apo-4'-carotenal, whereas the aldehyde dehydrogenase carD mediates the last step by converting beta-apo-4'-carotenal into neurosporaxanthin. This Gibberella fujikuroi (strain CBS 195.34 / IMI 58289 / NRRL A-6831) (Bakanae and foot rot disease fungus) protein is Beta-apo-4'-carotenal oxygenase.